We begin with the raw amino-acid sequence, 395 residues long: MKKLLKSVLVFAALSSASSLQALPVGNPAEPSLMIDGILWEGFGGDPCDPCTTWCDAISMRMGYYGDFVFDRVLKTDVNKEFEMGEALAGASGNTTSTLSKLVERTNPAYGKHMQDAEMFTNAACMTLNIWDRFDVFCTLGATSGYLKGNSASFNLVGLFGDGVNATKPAADSIPNVQLNQSVVELYTDTTFAWSVGARAALWECGCATLGASFQYAQSKPKIEELNVLCNAAEFTINKPKGYVGKEFPLDLTAGTDAATGTKDASIDYHEWQASLSLSYRLNMFTPYIGVKWSRASFDSDTIRIAQPRLVTPVVDITTLNPTIAGCGSVAGANTEGQISDTMQIVSLQLNKMKSRKSCGIAVGTTIVDADKYAVTVETRLIDERAAHVNAQFRF.

Positions 1 to 22 are cleaved as a signal peptide; sequence MKKLLKSVLVFAALSSASSLQA.

This sequence belongs to the chlamydial porin (CP) (TC 1.B.2) family. In terms of assembly, part of a disulfide cross-linked outer membrane complex (COMC) composed of the major outer membrane porin (MOMP), the small cysteine-rich protein (OmcA) and the large cysteine-rich periplasmic protein (OmcB).

Its subcellular location is the cell outer membrane. Its function is as follows. In elementary bodies (EBs, the infectious stage, which is able to survive outside the host cell) provides the structural integrity of the outer envelope through disulfide cross-links with the small cysteine-rich protein and the large cysteine-rich periplasmic protein. It has been described in publications as the Sarkosyl-insoluble COMC (Chlamydia outer membrane complex), and serves as the functional equivalent of peptidoglycan. Permits diffusion of specific solutes through the outer membrane. This chain is Major outer membrane porin, serovar F (ompA), found in Chlamydia trachomatis.